The following is a 375-amino-acid chain: Dual-specificity RNA methyltransferase RlmN (375 aa).

Catalysis depends on E94, which acts as the Proton acceptor. The Radical SAM core domain maps to 100 to 339; the sequence is EDDRATLCVS…VTVRKTRGDD (240 aa). C107 and C344 are joined by a disulfide. The [4Fe-4S] cluster site is built by C114, C118, and C121. Residues 168-169, S200, 222-224, and N301 contribute to the S-adenosyl-L-methionine site; these read GE and SLH. The active-site S-methylcysteine intermediate is the C344.

It belongs to the radical SAM superfamily. RlmN family. Requires [4Fe-4S] cluster as cofactor.

The protein resides in the cytoplasm. It carries out the reaction adenosine(2503) in 23S rRNA + 2 reduced [2Fe-2S]-[ferredoxin] + 2 S-adenosyl-L-methionine = 2-methyladenosine(2503) in 23S rRNA + 5'-deoxyadenosine + L-methionine + 2 oxidized [2Fe-2S]-[ferredoxin] + S-adenosyl-L-homocysteine. The enzyme catalyses adenosine(37) in tRNA + 2 reduced [2Fe-2S]-[ferredoxin] + 2 S-adenosyl-L-methionine = 2-methyladenosine(37) in tRNA + 5'-deoxyadenosine + L-methionine + 2 oxidized [2Fe-2S]-[ferredoxin] + S-adenosyl-L-homocysteine. Functionally, specifically methylates position 2 of adenine 2503 in 23S rRNA and position 2 of adenine 37 in tRNAs. m2A2503 modification seems to play a crucial role in the proofreading step occurring at the peptidyl transferase center and thus would serve to optimize ribosomal fidelity. The chain is Dual-specificity RNA methyltransferase RlmN from Vibrio campbellii (strain ATCC BAA-1116).